A 232-amino-acid polypeptide reads, in one-letter code: Large ribosomal subunit protein uL1 (232 aa).

The protein belongs to the universal ribosomal protein uL1 family. Part of the 50S ribosomal subunit.

Functionally, binds directly to 23S rRNA. The L1 stalk is quite mobile in the ribosome, and is involved in E site tRNA release. Its function is as follows. Protein L1 is also a translational repressor protein, it controls the translation of the L11 operon by binding to its mRNA. The sequence is that of Large ribosomal subunit protein uL1 from Alkaliphilus metalliredigens (strain QYMF).